The chain runs to 579 residues: Rhoptry surface protein CERLI2 (579 aa).

Positions 52-84 (LHNYRTFYLLIKINEIFNINKYKQIYIIVNTDK) constitute a C2 domain. 11 consecutive repeat copies span residues 442 to 451 (QTDEIKNDNI), 452 to 461 (QTDEIKNDHI), 462 to 471 (QTDEIKNDNI), 472 to 481 (QTDEIKNDNI), 482 to 491 (QTDEIKNDHI), 492 to 501 (QTDEIKNDNI), 502 to 511 (QTDEIKNDNI), 522 to 531 (QTDEINNDHI), 532 to 541 (QTDEIKNDHI), 542 to 551 (QTDEIKNDHI), and 552 to 561 (QTDEIKNDIN). Positions 442-561 (QTDEIKNDNI…QTDEIKNDIN (120 aa)) are 12 X 10 AA tandem repeat of Q-T-E-I-[K/N]-N-D-[H/N/I][I/N].

The protein resides in the cytoplasmic vesicle. The protein localises to the secretory vesicle. Its subcellular location is the rhoptry membrane. It is found in the cell membrane. It localises to the host cell membrane. In terms of biological role, plays an important role in rhoptry physiology and thus is essential for merozoite invasion of host erythrocytes. The polypeptide is Rhoptry surface protein CERLI2 (Plasmodium falciparum (isolate 3D7)).